The chain runs to 110 residues: Small ribosomal subunit protein uS17 (110 aa).

Belongs to the universal ribosomal protein uS17 family. Part of the 30S ribosomal subunit.

One of the primary rRNA binding proteins, it binds specifically to the 5'-end of 16S ribosomal RNA. The sequence is that of Small ribosomal subunit protein uS17 from Haloquadratum walsbyi (strain DSM 16790 / HBSQ001).